The primary structure comprises 364 residues: Methylenetetrahydrofolate--tRNA-(uracil-5-)-methyltransferase TrmFO (364 aa).

11 to 16 (GAGLAG) contributes to the FAD binding site. The segment covering 335–352 (SYLNQPCSSANDPTSSLL) has biased composition (polar residues). Residues 335-364 (SYLNQPCSSANDPTSSLLDRSPAQRDIPLQ) form a disordered region.

Belongs to the MnmG family. TrmFO subfamily. It depends on FAD as a cofactor.

It localises to the cytoplasm. The catalysed reaction is uridine(54) in tRNA + (6R)-5,10-methylene-5,6,7,8-tetrahydrofolate + NADH + H(+) = 5-methyluridine(54) in tRNA + (6S)-5,6,7,8-tetrahydrofolate + NAD(+). It catalyses the reaction uridine(54) in tRNA + (6R)-5,10-methylene-5,6,7,8-tetrahydrofolate + NADPH + H(+) = 5-methyluridine(54) in tRNA + (6S)-5,6,7,8-tetrahydrofolate + NADP(+). Its function is as follows. Catalyzes the folate-dependent formation of 5-methyl-uridine at position 54 (M-5-U54) in all tRNAs. The polypeptide is Methylenetetrahydrofolate--tRNA-(uracil-5-)-methyltransferase TrmFO (Prochlorococcus marinus (strain MIT 9313)).